The following is a 78-amino-acid chain: Large ribosomal subunit protein bL28 (78 aa).

The tract at residues 1-30 (MAAHCQVTGAQPGFGHSISHSHRRTKRRWN) is disordered. Basic residues predominate over residues 19–30 (SHSHRRTKRRWN).

Belongs to the bacterial ribosomal protein bL28 family.

This Kocuria rhizophila (strain ATCC 9341 / DSM 348 / NBRC 103217 / DC2201) protein is Large ribosomal subunit protein bL28.